The chain runs to 492 residues: Catalase isozyme 2 (492 aa).

Residues His65 and Asn138 contribute to the active site. Tyr348 serves as a coordination point for heme.

This sequence belongs to the catalase family. In terms of assembly, homotetramer. Requires heme as cofactor.

It localises to the peroxisome. The catalysed reaction is 2 H2O2 = O2 + 2 H2O. Functionally, occurs in almost all aerobically respiring organisms and serves to protect cells from the toxic effects of hydrogen peroxide. The polypeptide is Catalase isozyme 2 (CAT2) (Solanum lycopersicum (Tomato)).